The chain runs to 289 residues: Serine/threonine-protein phosphatase Pgam5, mitochondrial (289 aa).

A helical transmembrane segment spans residues Phe7–Leu23.

Belongs to the phosphoglycerate mutase family. BPG-dependent PGAM subfamily. Interacts with Pk92B/ASK1.

The protein localises to the mitochondrion outer membrane. It catalyses the reaction O-phospho-L-seryl-[protein] + H2O = L-seryl-[protein] + phosphate. It carries out the reaction O-phospho-L-threonyl-[protein] + H2O = L-threonyl-[protein] + phosphate. Functionally, displays phosphatase activity for serine/threonine residues, and dephosphorylates and activates Pk92B kinase. Has apparently no phosphoglycerate mutase activity. The protein is Serine/threonine-protein phosphatase Pgam5, mitochondrial of Drosophila simulans (Fruit fly).